The primary structure comprises 531 residues: MCYFISKKKGLGGFFLKKNENIRWQQHFLYPLLFHNDFYVIDPNLLFNSSPSFEKIEKLPNSFRFLNVKRSIKLLHQQNYLVYNTRSSCFNFIGKTFFFCFDIFVSTWWKHFFGFKVTFKEINQQVNFQSVFSLFLFLEEVFMFSLSFSNIRIPSSIHSELLIRRFKFSIQDVSFLHFLSFILFSKQFKFVNNSIIFPRGNVIFCFFLGNILLSIFEDFFTLRWKSCFHEKSLSYGLFSEQKHFQQKWNFLTRKPKKKDTIRLLKDFFFHYIRYGEKLILLGTTILVKKCEFFFLNFWQTYLFVLSEPSSFFLKQISSQNIFFLAYYLEYPTNSFLLRLNILDYFLSTDFVGRELNSKLSAVFVIQFLSKEGLCDIMGNPKSKLAWLSFTDNSILDKYDHFCRNVDSFYSEAINKRFLDRVKDILFLSCIKTLACKHKSTIRIVRKELGFELRKIFVRKQVEFKNKKLLYFCFHKQFRKLLFKIDLVTERLWFLDILEVNNFTKFWVKQQNALDFFFIFDQNIWFMLDQFL.

The protein belongs to the intron maturase 2 family. MatK subfamily.

The protein localises to the plastid. The protein resides in the chloroplast. In terms of biological role, usually encoded in the trnK tRNA gene intron. Probably assists in splicing its own and other chloroplast group II introns. This chain is Maturase K, found in Ephedra sinica (Chinese ephedra).